A 208-amino-acid chain; its full sequence is dITP/XTP pyrophosphatase (208 aa).

16-21 lines the substrate pocket; the sequence is TGNAGK. 2 residues coordinate Mg(2+): Glu-46 and Asp-75. Catalysis depends on Asp-75, which acts as the Proton acceptor. Substrate-binding positions include Ser-76, 155-158, Lys-178, and 183-184; these read FGYD and HR.

This sequence belongs to the HAM1 NTPase family. As to quaternary structure, homodimer. Mg(2+) is required as a cofactor.

It carries out the reaction XTP + H2O = XMP + diphosphate + H(+). The enzyme catalyses dITP + H2O = dIMP + diphosphate + H(+). It catalyses the reaction ITP + H2O = IMP + diphosphate + H(+). Pyrophosphatase that catalyzes the hydrolysis of nucleoside triphosphates to their monophosphate derivatives, with a high preference for the non-canonical purine nucleotides XTP (xanthosine triphosphate), dITP (deoxyinosine triphosphate) and ITP. Seems to function as a house-cleaning enzyme that removes non-canonical purine nucleotides from the nucleotide pool, thus preventing their incorporation into DNA/RNA and avoiding chromosomal lesions. The chain is dITP/XTP pyrophosphatase from Deinococcus deserti (strain DSM 17065 / CIP 109153 / LMG 22923 / VCD115).